We begin with the raw amino-acid sequence, 294 residues long: UDP-3-O-acyl-N-acetylglucosamine deacetylase (294 aa).

Zn(2+) is bound by residues histidine 75, histidine 232, and aspartate 236. Histidine 259 acts as the Proton donor in catalysis.

Belongs to the LpxC family. The cofactor is Zn(2+).

It carries out the reaction a UDP-3-O-[(3R)-3-hydroxyacyl]-N-acetyl-alpha-D-glucosamine + H2O = a UDP-3-O-[(3R)-3-hydroxyacyl]-alpha-D-glucosamine + acetate. Its pathway is glycolipid biosynthesis; lipid IV(A) biosynthesis; lipid IV(A) from (3R)-3-hydroxytetradecanoyl-[acyl-carrier-protein] and UDP-N-acetyl-alpha-D-glucosamine: step 2/6. Its function is as follows. Catalyzes the hydrolysis of UDP-3-O-myristoyl-N-acetylglucosamine to form UDP-3-O-myristoylglucosamine and acetate, the committed step in lipid A biosynthesis. This chain is UDP-3-O-acyl-N-acetylglucosamine deacetylase, found in Campylobacter jejuni subsp. jejuni serotype O:6 (strain 81116 / NCTC 11828).